A 190-amino-acid chain; its full sequence is Putative CRISPR system CMR subunit Cmr7 2 (190 aa).

Belongs to the CRISPR system Cmr7 family. In terms of assembly, homodimer.

Its function is as follows. CRISPR (clustered regularly interspaced short palindromic repeat) is an adaptive immune system that provides protection against mobile genetic elements (viruses, transposable elements and conjugative plasmids). CRISPR clusters contain spacers, sequences complementary to antecedent mobile elements, and target invading nucleic acids. CRISPR clusters are transcribed and processed into CRISPR RNA (crRNA). This chain is Putative CRISPR system CMR subunit Cmr7 2 (cmr7b), found in Saccharolobus solfataricus (strain ATCC 35092 / DSM 1617 / JCM 11322 / P2) (Sulfolobus solfataricus).